We begin with the raw amino-acid sequence, 217 residues long: Adenylate kinase (217 aa).

10-15 (GAGKGT) is a binding site for ATP. Residues 30–59 (STGDIFRAAMKNETPMGIEAKKYIDKGELV) form an NMP region. AMP contacts are provided by residues Thr31, Arg36, 57-59 (ELV), 85-88 (GFPR), and Gln92. The LID stretch occupies residues 126–164 (GRFICRNCGATYHKLYNAPKVEGTCDVCGHHEFYQRDDD). An ATP-binding site is contributed by Arg127. Residues Cys130 and Cys133 each coordinate Zn(2+). 136–137 (TY) is a binding site for ATP. Zn(2+)-binding residues include Cys150 and Cys153. AMP is bound by residues Arg161 and Arg172. ATP is bound at residue Gln200.

Belongs to the adenylate kinase family. Monomer.

The protein localises to the cytoplasm. The enzyme catalyses AMP + ATP = 2 ADP. It participates in purine metabolism; AMP biosynthesis via salvage pathway; AMP from ADP: step 1/1. In terms of biological role, catalyzes the reversible transfer of the terminal phosphate group between ATP and AMP. Plays an important role in cellular energy homeostasis and in adenine nucleotide metabolism. The protein is Adenylate kinase of Limosilactobacillus reuteri subsp. reuteri (strain JCM 1112) (Lactobacillus reuteri).